A 756-amino-acid chain; its full sequence is Cellulose synthase catalytic subunit [UDP-forming] (756 aa).

Transmembrane regions (helical) follow at residues 27-47, 49-69, 106-126, and 167-187; these read ASYI…TVTL, NNEQ…VGRG, GILG…LFLS, and LTVL…VYIL. The segment at 147-242 is catalytic subdomain A; the sequence is DWPTVDIFIP…YILILDCDHI (96 aa). Aspartate 189 is a catalytic residue. 2 residues coordinate substrate: aspartate 238 and aspartate 240. The catalytic subdomain B stretch occupies residues 319-379; the sequence is EAIESIGGFA…GQRMRWARGM (61 aa). The active site involves aspartate 335. A run of 5 helical transmembrane segments spans residues 409–429, 432–452, 470–490, 517–537, and 551–571; these read FFFA…LFAG, IIAA…FHSI, VYET…LLFP, NIIF…ELIV, and LLNC…IAVG. The PilZ domain maps to 576–681; sequence QVRYNHRVEA…ERDIVRFVFG (106 aa). Residues 721 to 756 are disordered; that stretch reads NSRPKKKPLALPVERREPTTIHSGQTQEGKISRAAS. The segment covering 740 to 756 has biased composition (polar residues); the sequence is TIHSGQTQEGKISRAAS.

This sequence belongs to the glycosyltransferase 2 family. Mg(2+) serves as cofactor.

It is found in the cell inner membrane. It catalyses the reaction [(1-&gt;4)-beta-D-glucosyl](n) + UDP-alpha-D-glucose = [(1-&gt;4)-beta-D-glucosyl](n+1) + UDP + H(+). Its pathway is glycan metabolism; bacterial cellulose biosynthesis. With respect to regulation, activated by bis-(3'-5') cyclic diguanylic acid (c-di-GMP). Catalytic subunit of cellulose synthase. It polymerizes uridine 5'-diphosphate glucose to cellulose. The thick cellulosic mats generated by this enzyme probably provide a specialized protective environment to the bacterium. The polypeptide is Cellulose synthase catalytic subunit [UDP-forming] (bcsA) (Komagataeibacter sucrofermentans (strain ATCC 700178 / DSM 15973 / CECT 7291 / JCM 9730 / LMG 18788 / BPR 2001) (Acetobacter xylinus subsp. sucrofermentans)).